A 274-amino-acid polypeptide reads, in one-letter code: Ribonucleoside-diphosphate reductase small chain (274 aa).

Residues Asp-70, Glu-101, and His-104 each coordinate Fe cation. Tyr-108 is a catalytic residue. 3 residues coordinate Fe cation: Glu-163, Glu-197, and His-200.

The protein belongs to the ribonucleoside diphosphate reductase small chain family. As to quaternary structure, heterodimer of a large and a small chain. Requires Fe cation as cofactor.

The catalysed reaction is a 2'-deoxyribonucleoside 5'-diphosphate + [thioredoxin]-disulfide + H2O = a ribonucleoside 5'-diphosphate + [thioredoxin]-dithiol. Its function is as follows. Ribonucleoside-diphosphate reductase holoenzyme provides the precursors necessary for viral DNA synthesis. Allows virus growth in non-dividing cells. Catalyzes the biosynthesis of deoxyribonucleotides from the corresponding ribonucleotides. The chain is Ribonucleoside-diphosphate reductase small chain from Sus scrofa (Pig).